The primary structure comprises 212 residues: Large ribosomal subunit protein uL3 (212 aa).

The disordered stretch occupies residues 135 to 156 (MTHGNSRSHRVPGSIGQNQSPG). Residue Gln153 is modified to N5-methylglutamine.

It belongs to the universal ribosomal protein uL3 family. In terms of assembly, part of the 50S ribosomal subunit. Forms a cluster with proteins L14 and L19. Post-translationally, methylated by PrmB.

Functionally, one of the primary rRNA binding proteins, it binds directly near the 3'-end of the 23S rRNA, where it nucleates assembly of the 50S subunit. The polypeptide is Large ribosomal subunit protein uL3 (Tolumonas auensis (strain DSM 9187 / NBRC 110442 / TA 4)).